A 175-amino-acid polypeptide reads, in one-letter code: NADH-ubiquinone oxidoreductase chain 6 (175 aa).

Helical transmembrane passes span 1-21, 25-45, 47-67, 88-108, and 149-169; these read MMTY…VGFS, SPIY…GIVL, FGGS…MMVV, VVLG…YYVL, and YGTW…VVIM.

This sequence belongs to the complex I subunit 6 family. Core subunit of respiratory chain NADH dehydrogenase (Complex I) which is composed of 45 different subunits.

The protein localises to the mitochondrion inner membrane. It carries out the reaction a ubiquinone + NADH + 5 H(+)(in) = a ubiquinol + NAD(+) + 4 H(+)(out). Functionally, core subunit of the mitochondrial membrane respiratory chain NADH dehydrogenase (Complex I) which catalyzes electron transfer from NADH through the respiratory chain, using ubiquinone as an electron acceptor. Essential for the catalytic activity and assembly of complex I. The sequence is that of NADH-ubiquinone oxidoreductase chain 6 (MT-ND6) from Ovis aries (Sheep).